We begin with the raw amino-acid sequence, 548 residues long: Cytochrome P450 monooxygenase lcsK (548 aa).

2 helical membrane-spanning segments follow: residues 28–48 (HAYP…LWAF) and 68–88 (VLLF…RLFF). N-linked (GlcNAc...) asparagine glycosylation is found at asparagine 172, asparagine 223, asparagine 242, and asparagine 404. Cysteine 487 contributes to the heme binding site.

This sequence belongs to the cytochrome P450 family. Requires heme as cofactor.

The protein resides in the membrane. Its pathway is secondary metabolite biosynthesis. In terms of biological role, cytochrome P450 monooxygenase; part of the gene cluster that mediates the biosynthesis of the lipopeptide antibiotics leucinostatins that show extensive biological activities, including antimalarial, antiviral, antibacterial, antifungal, and antitumor activities, as well as phytotoxic. Leucinostatin A contains nine amino acid residues, including the unusual amino acid 4-methyl-L-proline (MePro), 2-amino-6-hydroxy-4-methyl-8-oxodecanoic acid (AHyMeOA), 3-hydroxyleucine (HyLeu), alpha-aminoisobutyric acid (AIB), beta-Ala, a 4-methylhex-2-enoic acid at the N-terminus as well as a N1,N1-dimethylpropane-1,2-diamine (DPD) at the C-terminus. The biosynthesis of leucinostatins is probably initiated with the assembly of 4-methylhex-2-enoic acid by a reducing PKS. Two reducing polyketide synthases, lcsB and lcsC, have been identified in the cluster and it is not clear which is the one that assembles 4-methylhex-2-enoic acid since both contain KS, AT, DH, cMT, ER, KR and ACP domains. The polyketide residue might be transferred to the NRPS lcsA, mediated by two additional enzymes, the acyl-CoA ligase lcsD and the thioesterase lcsE. The linear polyketide carboxylic acid, which is released from PKS, is converted to a CoA thioester by lcsD, and then lcsE hydrolyzes the thiol bond and shuttles the polyketide intermediate to lcsA. The C domain of the first module catalyzed the condensation of 4-methylhex-2-enoic acid and MePro carried by domain A1, followed by successive condensations of nine amino acids to trigger the elongation of the linear peptide. A5 and A6 domains of lcsA are proposed to incorporate leucine, A2 AHyMeOA, and A3 incorporates HyLeu. A4, A7 and A8 incorporate AIB. The AHyMeOA in leucinostatin A activated by the A2 might be produced by the second PKS (lcsB or lcsC) present within the cluster. The MePro is probably produced via leucine cyclization and may originate from a separate pathway, independent of the cluster. Another nonproteinogenic amino acid, beta-Ala, could be produced by an aspartic acid decarboxylase also localized outside of the cluster. Two candidates are VFPBJ_01400 and VFPBJ_10476. The final peptide scaffold may be released by the NAD(P)H-dependent thioester reductase (TE) at the C-terminal region of lcsA. Transamination of the lcsA product by the transaminase lcsP may produce DPD at the C-terminus. Further hydroxylation steps performed alternatively by the cytochrome P450 monooxygenases lcsI, lcsK and lcsN then yield the non-methylated leucinostatins precursor. It is also possible that leucines can be hydroxylated prior to their incorporation into the peptide. Varying extents of methylation then lead to the formation of leucinostatins A and B. This is Cytochrome P450 monooxygenase lcsK from Purpureocillium lilacinum (Paecilomyces lilacinus).